The chain runs to 460 residues: Tol-Pal system protein TolB (460 aa).

The signal sequence occupies residues 1–22 (MTIFQKSFILLIIWNFSLFAFS).

The protein belongs to the TolB family. In terms of assembly, the Tol-Pal system is composed of five core proteins: the inner membrane proteins TolA, TolQ and TolR, the periplasmic protein TolB and the outer membrane protein Pal. They form a network linking the inner and outer membranes and the peptidoglycan layer.

The protein resides in the periplasm. Functionally, part of the Tol-Pal system, which plays a role in outer membrane invagination during cell division and is important for maintaining outer membrane integrity. TolB occupies a key intermediary position in the Tol-Pal system because it communicates directly with both membrane-embedded components, Pal in the outer membrane and TolA in the inner membrane. This is Tol-Pal system protein TolB from Blochmanniella floridana.